Reading from the N-terminus, the 275-residue chain is TATA-box-binding protein (275 aa).

Disordered stretches follow at residues 23–45 and 73–92; these read EDESIQTQQQQQTPRHPASFGMN and GSMSIYGPGTPAPATPHTPA. Tandem repeats lie at residues 103–179 and 193–270.

Belongs to the TBP family. As to quaternary structure, belongs to the TFIID complex together with the TBP-associated factors (TAFs). Binds DNA as monomer.

It is found in the nucleus. In terms of biological role, general transcription factor that functions at the core of the DNA-binding multiprotein factor TFIID. Binding of TFIID to the TATA box is the initial transcriptional step of the pre-initiation complex (PIC), playing a role in the activation of eukaryotic genes transcribed by RNA polymerase II. The polypeptide is TATA-box-binding protein (Artemia franciscana (Brine shrimp)).